Here is a 290-residue protein sequence, read N- to C-terminus: MVRLHVKKGDESQFLFDTSVTVPVEELVKQITAIYNGRLKIDRICSEMGELAEHGITMPPNMQGLADEQIEELKLKDEWEERCVPSGGSVFKKDEIGRRNGHAPSDSMKKVLQKTMEEAKALISKKQAEANVCVTLEMVKEATDQLRGAVMIVYPMGLPPHDPIRMEFENNEDLSGTHAGQLVIEEPESQLWWAGKELQRKQKLSDYVGKNEKTRIIVKIQKRGQGAPAREPVITQEEQKKLMMHYYRRQEEFKKLEEDEDISYLNAEWADSNSLKRQFQGVKDIKWKPR.

The protein belongs to the CFAP298 family.

The protein localises to the cytoplasm. Its subcellular location is the cytoskeleton. It is found in the cilium basal body. Plays a role in motile cilium function, possibly by acting on outer dynein arm assembly. Seems to be important for initiation rather than maintenance of cilium motility. Required for correct positioning of the cilium at the apical cell surface, suggesting an additional role in the planar cell polarity (PCP) pathway. May suppress canonical Wnt signaling activity. The sequence is that of Cilia- and flagella-associated protein 298-A (cfap298-a) from Xenopus laevis (African clawed frog).